The sequence spans 164 residues: Transcription elongation factor GreA (164 aa).

The protein belongs to the GreA/GreB family.

Functionally, necessary for efficient RNA polymerase transcription elongation past template-encoded arresting sites. The arresting sites in DNA have the property of trapping a certain fraction of elongating RNA polymerases that pass through, resulting in locked ternary complexes. Cleavage of the nascent transcript by cleavage factors such as GreA or GreB allows the resumption of elongation from the new 3'terminus. GreA releases sequences of 2 to 3 nucleotides. The protein is Transcription elongation factor GreA of Helicobacter pylori (strain Shi470).